We begin with the raw amino-acid sequence, 359 residues long: Histidinol-phosphate aminotransferase 1 (359 aa).

N6-(pyridoxal phosphate)lysine is present on Lys-216.

Belongs to the class-II pyridoxal-phosphate-dependent aminotransferase family. Histidinol-phosphate aminotransferase subfamily. As to quaternary structure, homodimer. Pyridoxal 5'-phosphate is required as a cofactor.

It carries out the reaction L-histidinol phosphate + 2-oxoglutarate = 3-(imidazol-4-yl)-2-oxopropyl phosphate + L-glutamate. The protein operates within amino-acid biosynthesis; L-histidine biosynthesis; L-histidine from 5-phospho-alpha-D-ribose 1-diphosphate: step 7/9. The protein is Histidinol-phosphate aminotransferase 1 (hisC1) of Caulobacter vibrioides (strain ATCC 19089 / CIP 103742 / CB 15) (Caulobacter crescentus).